The primary structure comprises 309 residues: Homoserine O-succinyltransferase (309 aa).

C142 serves as the catalytic Acyl-thioester intermediate. Residues K163 and S192 each coordinate substrate. H235 serves as the catalytic Proton acceptor. Residue E237 is part of the active site. A substrate-binding site is contributed by R249.

This sequence belongs to the MetA family.

It is found in the cytoplasm. The enzyme catalyses L-homoserine + succinyl-CoA = O-succinyl-L-homoserine + CoA. The protein operates within amino-acid biosynthesis; L-methionine biosynthesis via de novo pathway; O-succinyl-L-homoserine from L-homoserine: step 1/1. In terms of biological role, transfers a succinyl group from succinyl-CoA to L-homoserine, forming succinyl-L-homoserine. This chain is Homoserine O-succinyltransferase, found in Serratia proteamaculans (strain 568).